Consider the following 432-residue polypeptide: Asparagine--tRNA ligase (432 aa).

This sequence belongs to the class-II aminoacyl-tRNA synthetase family. In terms of assembly, homodimer.

The protein resides in the cytoplasm. The enzyme catalyses tRNA(Asn) + L-asparagine + ATP = L-asparaginyl-tRNA(Asn) + AMP + diphosphate + H(+). The polypeptide is Asparagine--tRNA ligase (Limosilactobacillus reuteri (strain DSM 20016) (Lactobacillus reuteri)).